We begin with the raw amino-acid sequence, 109 residues long: Large ribosomal subunit protein P1C (109 aa).

A compositionally biased stretch (low complexity) spans 68 to 83; the sequence is ASAPTAAGAGAAAPAE. Residues 68–109 are disordered; it reads ASAPTAAGAGAAAPAEAAEEEKKEEAKEEEESDEDMGFGLFD. The span at 94–103 shows a compositional bias: acidic residues; it reads KEEEESDEDM. S99 is modified (phosphoserine).

This sequence belongs to the eukaryotic ribosomal protein P1/P2 family. Component of the large ribosomal subunit (LSU). Mature yeast ribosomes consist of a small (40S) and a large (60S) subunit. The 40S small subunit contains 1 molecule of ribosomal RNA (18S rRNA) and at least 33 different proteins. The large 60S subunit contains 3 rRNA molecules (25S, 5.8S and 5S rRNA) and at least 46 different proteins. The acidic ribosomal P-proteins form the stalk structure of the 60S subunit. They are organized as a pentameric complex in which uL10/P0 interacts with 2 heterodimers of P1 and P2 proteins.

It is found in the cytoplasm. Component of the ribosome, a large ribonucleoprotein complex responsible for the synthesis of proteins in the cell. The small ribosomal subunit (SSU) binds messenger RNAs (mRNAs) and translates the encoded message by selecting cognate aminoacyl-transfer RNA (tRNA) molecules. The large subunit (LSU) contains the ribosomal catalytic site termed the peptidyl transferase center (PTC), which catalyzes the formation of peptide bonds, thereby polymerizing the amino acids delivered by tRNAs into a polypeptide chain. The nascent polypeptides leave the ribosome through a tunnel in the LSU and interact with protein factors that function in enzymatic processing, targeting, and the membrane insertion of nascent chains at the exit of the ribosomal tunnel. This is Large ribosomal subunit protein P1C (rpp103) from Schizosaccharomyces pombe (strain 972 / ATCC 24843) (Fission yeast).